The primary structure comprises 925 residues: Leucine--tRNA ligase (925 aa).

The 'HIGH' region motif lies at 40–51 (PYPSGAGLHVGH). The 'KMSKS' region signature appears at 700-704 (KMSKS). Position 703 (Lys703) interacts with ATP.

It belongs to the class-I aminoacyl-tRNA synthetase family.

Its subcellular location is the cytoplasm. It catalyses the reaction tRNA(Leu) + L-leucine + ATP = L-leucyl-tRNA(Leu) + AMP + diphosphate. The sequence is that of Leucine--tRNA ligase from Porphyromonas gingivalis (strain ATCC 33277 / DSM 20709 / CIP 103683 / JCM 12257 / NCTC 11834 / 2561).